The following is a 226-amino-acid chain: 7-cyano-7-deazaguanine synthase (226 aa).

8-18 (LSGGLDSTTVL) serves as a coordination point for ATP. Zn(2+)-binding residues include Cys-190, Cys-198, Cys-201, and Cys-204.

It belongs to the QueC family. In terms of assembly, homodimer. Zn(2+) is required as a cofactor.

It carries out the reaction 7-carboxy-7-deazaguanine + NH4(+) + ATP = 7-cyano-7-deazaguanine + ADP + phosphate + H2O + H(+). The protein operates within purine metabolism; 7-cyano-7-deazaguanine biosynthesis. Catalyzes the ATP-dependent conversion of 7-carboxy-7-deazaguanine (CDG) to 7-cyano-7-deazaguanine (preQ(0)). The protein is 7-cyano-7-deazaguanine synthase of Clostridium kluyveri (strain ATCC 8527 / DSM 555 / NBRC 12016 / NCIMB 10680 / K1).